The following is a 305-amino-acid chain: Acetaldehyde dehydrogenase 5 (305 aa).

11-14 (SGNI) contributes to the NAD(+) binding site. Cysteine 130 functions as the Acyl-thioester intermediate in the catalytic mechanism. NAD(+) is bound by residues 161-169 (SIGPGTRAN) and asparagine 272.

It belongs to the acetaldehyde dehydrogenase family.

The catalysed reaction is acetaldehyde + NAD(+) + CoA = acetyl-CoA + NADH + H(+). This chain is Acetaldehyde dehydrogenase 5, found in Dechloromonas aromatica (strain RCB).